The sequence spans 236 residues: Eukaryotic translation initiation factor 3 subunit J (236 aa).

Disordered regions lie at residues 1-88 (MADD…LANM) and 188-236 (SEKQ…DDFM). Over residues 28–46 (GEDDDEDVKESWEDEEEKK) the composition is skewed to acidic residues. 3 stretches are compositionally biased toward basic and acidic residues: residues 47–58 (DEEKPTKTEAPV), 68–88 (AKLE…LANM), and 188–197 (SEKQKMEKAN). 2 coiled-coil regions span residues 61-112 (KPNK…LKSA) and 174-209 (ADIK…KGKV). A compositionally biased stretch (basic residues) spans 201–210 (SAAKAKGKVS).

It belongs to the eIF-3 subunit J family. As to quaternary structure, component of the eukaryotic translation initiation factor 3 (eIF-3) complex. The eIF-3 complex interacts with pix.

It is found in the cytoplasm. Its function is as follows. Component of the eukaryotic translation initiation factor 3 (eIF-3) complex, which is involved in protein synthesis of a specialized repertoire of mRNAs and, together with other initiation factors, stimulates binding of mRNA and methionyl-tRNAi to the 40S ribosome. The eIF-3 complex specifically targets and initiates translation of a subset of mRNAs involved in cell proliferation. The polypeptide is Eukaryotic translation initiation factor 3 subunit J (Drosophila virilis (Fruit fly)).